We begin with the raw amino-acid sequence, 154 residues long: Transcription antitermination protein NusB (154 aa).

Belongs to the NusB family.

Involved in transcription antitermination. Required for transcription of ribosomal RNA (rRNA) genes. Binds specifically to the boxA antiterminator sequence of the ribosomal RNA (rrn) operons. The protein is Transcription antitermination protein NusB of Rickettsia typhi (strain ATCC VR-144 / Wilmington).